Consider the following 155-residue polypeptide: MLP-like protein 423 (155 aa).

Belongs to the MLP family.

This is MLP-like protein 423 (MLP423) from Arabidopsis thaliana (Mouse-ear cress).